Consider the following 215-residue polypeptide: Unique short US11 glycoprotein (215 aa).

Positions 1 to 17 (MNLVMLILALWAPVAGS) form a signal peptide, partially cleaved. Topologically, residues 18 to 182 (MPELSLTLFD…YYALTIKSAQ (165 aa)) are lumenal. In terms of domain architecture, Ig-like H-type spans 47–146 (YRVEYSEARC…TYYVECEPRC (100 aa)). A disulfide bond links Cys-56 and Cys-142. N-linked (GlcNAc...) asparagine; by host glycosylation is present at Asn-73. A helical transmembrane segment spans residues 183–203 (YTLMMVAVIQVFWGLYVKGWL). The Cytoplasmic portion of the chain corresponds to 204-215 (HRHFPWMFSDQW).

This sequence belongs to the cytomegalovirus US6 family. As to quaternary structure, interacts with host TRAM1. Post-translationally, N-glycosylated. In terms of processing, a fraction of newly synthesized molecules retain the signal peptide after the N-linked glycan has been attached and translation of the polypeptide has been completed. Delayed cleavage of the signal peptide is determined by the first four residues, as well as by the transmembrane region.

It localises to the host endoplasmic reticulum membrane. Functionally, participates in the inhibition of the host immune response. Redirects newly synthesized major histocompatibility complex (MHC) class I heavy chains via the SEC61 translocon to the cytosol where they undergo proteasome-dependent destruction. In consequence, infected cells are masked for immune recognition by cytotoxic T-lymphocytes. The chain is Unique short US11 glycoprotein (US11) from Human cytomegalovirus (strain AD169) (HHV-5).